The primary structure comprises 193 residues: uncharacterized protein (193 aa).

Residues 153–170 (WRYWAVIALIAAVLIYLY) traverse the membrane as a helical segment.

It localises to the membrane. This is an uncharacterized protein from Invertebrate iridescent virus 6 (IIV-6).